The following is a 227-amino-acid chain: MEIVRLSLFGNPNIGVYVFANNSIALVPPSLSSGEKKVIAETLDVELVETKIANTILNGVLVVGNDNGIILPRIILDEELDILNNNLKKHDLNIYVSRSKNTALGNILLCNNKACIAGSELERQELNKISEALGVEALYKDIMNLTIPGSLAVVTDKGGVIHPDISDDENRELKEIFKVAFERATVNSGIPFIKSGLIANNKGIIVGEYTTGPEILRIRRGLSGGAI.

It belongs to the eIF-6 family.

Functionally, binds to the 50S ribosomal subunit and prevents its association with the 30S ribosomal subunit to form the 70S initiation complex. In Staphylothermus marinus (strain ATCC 43588 / DSM 3639 / JCM 9404 / F1), this protein is Translation initiation factor 6.